The following is a 524-amino-acid chain: MLPNTGKLAGCTVFITGASRGIGKAIALKAAKDGANIVIAAKTTQRHPKLLGTIYTAAEEIEAAGGKALPCVVDVRDEQQINSAVEKAVERFGGIDILVNNASAISLTNTLETPTKRVDLMMSVNTRGTYLTSKACIPFLKKSKVAHILNLSPPLNLNPMWFKQHCAYTIAKYGMSMCVLGMAEEFRGEIAVNALWPRTAIHTAAMDMLGGAGVESQCRKVDIIADAAYSIFKRPKSFTGNFIIDENILKEEGIKDFDIYAITPGHPLLPDFFLDEHPDAVMEEKESYDPVPEVKEEKLQLQEQPQLQEQPQLQEKPQLQEQPQLQEKPQLQEQPQLQEQPQLQEQPQQQPQLQEQPQLQEKPQLQEQPQQQEKPQPQQQPQQQPQQRPQQRPQPQPQPQPLLQSVLPPKPHFGAVEETFRIVKDSLSDEVVRATQAVYQFELSGEDGGTWFLDLKSKGGKVGHGEPSDRADVVMSMATEDFVKMFSGKLKPTMAFMSGKLKIKGNIALAIKLEKLMTHMNSRL.

NADP(+) contacts are provided by residues 17–23 (GASRGIG), lysine 42, and aspartate 74. The residue at position 42 (lysine 42) is an N6-(2-hydroxyisobutyryl)lysine. Position 116 is an N6-acetyllysine (lysine 116). Tyrosine 168 (proton acceptor) is an active-site residue. Residue lysine 172 coordinates NADP(+). Over residues 283 to 300 (EEKESYDPVPEVKEEKLQ) the composition is skewed to basic and acidic residues. The tract at residues 283 to 410 (EEKESYDPVP…PLLQSVLPPK (128 aa)) is disordered. Positions 301 to 391 (LQEQPQLQEQ…QQQPQQRPQQ (91 aa)) are enriched in low complexity. One can recognise an SCP2 domain in the interval 414-521 (GAVEETFRIV…KLEKLMTHMN (108 aa)). Position 424 is an N6-succinyllysine (lysine 424).

It belongs to the short-chain dehydrogenases/reductases (SDR) family.

The protein localises to the peroxisome. The protein resides in the mitochondrion. Has apparently no steroid dehydrogenase activity. Controls bile acid (BA) and lipid metabolism in response to nutritional cues. This chain is Hydroxysteroid dehydrogenase-like protein 2 (Hsdl2), found in Rattus norvegicus (Rat).